The following is a 255-amino-acid chain: tRNA uridine(34) hydroxylase (255 aa).

Residues 125–219 (ATPDTILLDV…YLEQIPESES (95 aa)) enclose the Rhodanese domain. Cys-179 acts as the Cysteine persulfide intermediate in catalysis.

This sequence belongs to the TrhO family.

It carries out the reaction uridine(34) in tRNA + AH2 + O2 = 5-hydroxyuridine(34) in tRNA + A + H2O. Catalyzes oxygen-dependent 5-hydroxyuridine (ho5U) modification at position 34 in tRNAs. The sequence is that of tRNA uridine(34) hydroxylase from Nitrobacter winogradskyi (strain ATCC 25391 / DSM 10237 / CIP 104748 / NCIMB 11846 / Nb-255).